Here is a 450-residue protein sequence, read N- to C-terminus: MKKITKFKDQKILVLGLARSGMAAALVLNELGAIVTVNDGKPFEENKEAQLLLEEGIKVITGSHPIDLLDEDFALMVKNPGIRYDNPMVERAEALNIPVITEVELAYLISEAPIIGITGTNGKTTTTTLIADILNADGQSAKLSGNIGFPASEVAEKASASDTLVMELSSFQLMGIDSFRPKIALITNLFSAHLDYHGSQKAYEAAKWRIQENMTSDDFLILNFNQEKCRNLADKTKATVLAFSTKEKVNGAYSKDGKIYFNDEYIMEVSELSLPGEHNLENALAAIVASKLQGTKNEAIVEVLTSFAGVKHRLQYLGEIDGRKVYNDSKATNILATQKALSGFDNSKLWLLAGGLDRGNGFEELEKDLQDLKGMVVFGQTANKLRLTAEKLNIPVFDSENVAKALEEILPQTQAGDTILLSPACASWDQYKTFEERGDLFIQAFENLKK.

119–125 (GTNGKTT) is a binding site for ATP.

The protein belongs to the MurCDEF family.

The protein resides in the cytoplasm. It catalyses the reaction UDP-N-acetyl-alpha-D-muramoyl-L-alanine + D-glutamate + ATP = UDP-N-acetyl-alpha-D-muramoyl-L-alanyl-D-glutamate + ADP + phosphate + H(+). It functions in the pathway cell wall biogenesis; peptidoglycan biosynthesis. Its function is as follows. Cell wall formation. Catalyzes the addition of glutamate to the nucleotide precursor UDP-N-acetylmuramoyl-L-alanine (UMA). In Lactococcus lactis subsp. lactis (strain IL1403) (Streptococcus lactis), this protein is UDP-N-acetylmuramoylalanine--D-glutamate ligase.